The sequence spans 449 residues: UDP-N-acetylmuramoylalanine--D-glutamate ligase (449 aa).

118–124 provides a ligand contact to ATP; that stretch reads GSNGKTT.

It belongs to the MurCDEF family.

Its subcellular location is the cytoplasm. It carries out the reaction UDP-N-acetyl-alpha-D-muramoyl-L-alanine + D-glutamate + ATP = UDP-N-acetyl-alpha-D-muramoyl-L-alanyl-D-glutamate + ADP + phosphate + H(+). It functions in the pathway cell wall biogenesis; peptidoglycan biosynthesis. Functionally, cell wall formation. Catalyzes the addition of glutamate to the nucleotide precursor UDP-N-acetylmuramoyl-L-alanine (UMA). The polypeptide is UDP-N-acetylmuramoylalanine--D-glutamate ligase (Leuconostoc mesenteroides subsp. mesenteroides (strain ATCC 8293 / DSM 20343 / BCRC 11652 / CCM 1803 / JCM 6124 / NCDO 523 / NBRC 100496 / NCIMB 8023 / NCTC 12954 / NRRL B-1118 / 37Y)).